A 132-amino-acid chain; its full sequence is Small ribosomal subunit protein uS11 (132 aa).

Positions 1-16 (MAAGMKGKRSRRRKER) are enriched in basic residues. The tract at residues 1 to 20 (MAAGMKGKRSRRRKERKNVE) is disordered.

Belongs to the universal ribosomal protein uS11 family. In terms of assembly, part of the 30S ribosomal subunit. Interacts with proteins S7 and S18. Binds to IF-3.

Functionally, located on the platform of the 30S subunit, it bridges several disparate RNA helices of the 16S rRNA. Forms part of the Shine-Dalgarno cleft in the 70S ribosome. The polypeptide is Small ribosomal subunit protein uS11 (Clostridium botulinum (strain Loch Maree / Type A3)).